Reading from the N-terminus, the 93-residue chain is Small ribosomal subunit protein bS6 (93 aa).

This sequence belongs to the bacterial ribosomal protein bS6 family.

Functionally, binds together with bS18 to 16S ribosomal RNA. This chain is Small ribosomal subunit protein bS6, found in Treponema denticola (strain ATCC 35405 / DSM 14222 / CIP 103919 / JCM 8153 / KCTC 15104).